The primary structure comprises 289 residues: Serine/threonine-protein phosphatase Pgam5, mitochondrial (289 aa).

Residues 7 to 23 (FACGTGAGLAAYYLQRL) traverse the membrane as a helical segment.

This sequence belongs to the phosphoglycerate mutase family. BPG-dependent PGAM subfamily. In terms of assembly, interacts with Pk92B/ASK1.

It localises to the mitochondrion outer membrane. It carries out the reaction O-phospho-L-seryl-[protein] + H2O = L-seryl-[protein] + phosphate. It catalyses the reaction O-phospho-L-threonyl-[protein] + H2O = L-threonyl-[protein] + phosphate. Its function is as follows. Displays phosphatase activity for serine/threonine residues, and dephosphorylates and activates Pk92B kinase. Has apparently no phosphoglycerate mutase activity. This Drosophila simulans (Fruit fly) protein is Serine/threonine-protein phosphatase Pgam5, mitochondrial.